Here is a 292-residue protein sequence, read N- to C-terminus: Probable 2-(5''-triphosphoribosyl)-3'-dephosphocoenzyme-A synthase (292 aa).

It belongs to the CitG/MdcB family.

The enzyme catalyses 3'-dephospho-CoA + ATP = 2'-(5''-triphospho-alpha-D-ribosyl)-3'-dephospho-CoA + adenine. The chain is Probable 2-(5''-triphosphoribosyl)-3'-dephosphocoenzyme-A synthase from Shigella sonnei (strain Ss046).